A 460-amino-acid chain; its full sequence is Acetyl-coenzyme A carboxylase carboxyl transferase subunit beta, chloroplastic (460 aa).

The region spanning 179–460 is the CoA carboxyltransferase N-terminal domain; sequence LWVQCESCYG…GFFPLTQNGN (282 aa). Zn(2+) is bound by residues C183, C186, C202, and C205. The C4-type zinc-finger motif lies at 183–205; the sequence is CESCYGLNYKKFFKSKMNICEHC.

Belongs to the AccD/PCCB family. Acetyl-CoA carboxylase is a heterohexamer composed of biotin carboxyl carrier protein, biotin carboxylase and 2 subunits each of ACCase subunit alpha and ACCase plastid-coded subunit beta (accD). It depends on Zn(2+) as a cofactor.

It is found in the plastid. Its subcellular location is the chloroplast stroma. The catalysed reaction is N(6)-carboxybiotinyl-L-lysyl-[protein] + acetyl-CoA = N(6)-biotinyl-L-lysyl-[protein] + malonyl-CoA. It participates in lipid metabolism; malonyl-CoA biosynthesis; malonyl-CoA from acetyl-CoA: step 1/1. In terms of biological role, component of the acetyl coenzyme A carboxylase (ACC) complex. Biotin carboxylase (BC) catalyzes the carboxylation of biotin on its carrier protein (BCCP) and then the CO(2) group is transferred by the transcarboxylase to acetyl-CoA to form malonyl-CoA. This Cicer arietinum (Chickpea) protein is Acetyl-coenzyme A carboxylase carboxyl transferase subunit beta, chloroplastic.